Reading from the N-terminus, the 313-residue chain is ADP-L-glycero-D-manno-heptose-6-epimerase (313 aa).

NADP(+)-binding positions include 10–11, 31–32, lysine 38, lysine 53, 75–79, and asparagine 92; these read MI, DN, and EGACS. Tyrosine 139 (proton acceptor) is an active-site residue. Residue lysine 143 participates in NADP(+) binding. Substrate is bound at residue asparagine 174. Residues valine 175 and lysine 183 each contribute to the NADP(+) site. The active-site Proton acceptor is lysine 183. Substrate contacts are provided by residues serine 185, histidine 192, 206–209, arginine 214, and tyrosine 277; that span reads FEGS.

It belongs to the NAD(P)-dependent epimerase/dehydratase family. HldD subfamily. In terms of assembly, homopentamer. Requires NADP(+) as cofactor.

The catalysed reaction is ADP-D-glycero-beta-D-manno-heptose = ADP-L-glycero-beta-D-manno-heptose. It participates in nucleotide-sugar biosynthesis; ADP-L-glycero-beta-D-manno-heptose biosynthesis; ADP-L-glycero-beta-D-manno-heptose from D-glycero-beta-D-manno-heptose 7-phosphate: step 4/4. Functionally, catalyzes the interconversion between ADP-D-glycero-beta-D-manno-heptose and ADP-L-glycero-beta-D-manno-heptose via an epimerization at carbon 6 of the heptose. This chain is ADP-L-glycero-D-manno-heptose-6-epimerase, found in Aliivibrio fischeri (strain ATCC 700601 / ES114) (Vibrio fischeri).